The sequence spans 362 residues: GDSL esterase/lipase At5g22810 (362 aa).

Residues Met1–Val28 form the signal peptide. Ser44 acts as the Nucleophile in catalysis. Asn159, Asn162, Asn264, and Asn329 each carry an N-linked (GlcNAc...) asparagine glycan. Active-site residues include Asp337 and His340.

This sequence belongs to the 'GDSL' lipolytic enzyme family.

Its subcellular location is the secreted. This Arabidopsis thaliana (Mouse-ear cress) protein is GDSL esterase/lipase At5g22810.